The sequence spans 179 residues: Iron sulfur cluster assembly protein 1, mitochondrial (179 aa).

Positions 160-179 are disordered; that stretch reads RSVKQPTLGPEAAQAETIAT.

This sequence belongs to the NifU family. As to quaternary structure, component of the core Fe-S cluster (ISC) assembly machinery. It depends on [2Fe-2S] cluster as a cofactor.

It is found in the mitochondrion matrix. It participates in cofactor biosynthesis; iron-sulfur cluster biosynthesis. Functionally, scaffold protein for the de novo synthesis of iron-sulfur (Fe-S) clusters within mitochondria, which is required for maturation of both mitochondrial and cytoplasmic [2Fe-2S] and [4Fe-4S] proteins. First, a [2Fe-2S] cluster is transiently assembled on the scaffold protein ISU1. In a second step, the cluster is released from ISU1, transferred to a glutaredoxin, followed by the formation of mitochondrial [2Fe-2S] proteins, the synthesis of [4Fe-4S] clusters and their target-specific insertion into the recipient apoproteins. Cluster assembly on ISU1 depends on the function of the cysteine desulfurase complex NFS1-ISD11, which serves as the sulfur donor for cluster synthesis, the iron-binding protein frataxin as the putative iron donor, and the electron transfer chain comprised of ferredoxin reductase and ferredoxin, which receive their electrons from NADH. This chain is Iron sulfur cluster assembly protein 1, mitochondrial (ISU1), found in Debaryomyces hansenii (strain ATCC 36239 / CBS 767 / BCRC 21394 / JCM 1990 / NBRC 0083 / IGC 2968) (Yeast).